Consider the following 328-residue polypeptide: L-lactate dehydrogenase (328 aa).

NAD(+) is bound by residues Val18, Glu39, Lys46, Tyr71, and 85–86 (GA). Gln88 and Arg94 together coordinate substrate. NAD(+)-binding positions include Ser107, 124-126 (AAN), and Ser149. Residue 126–129 (NPVD) coordinates substrate. 154-157 (DSAR) contacts substrate. Beta-D-fructose 1,6-bisphosphate contacts are provided by Arg159 and His174. His181 serves as the catalytic Proton acceptor. Tyr226 is modified (phosphotyrosine). Thr235 contacts substrate.

The protein belongs to the LDH/MDH superfamily. LDH family. Homotetramer.

It localises to the cytoplasm. The catalysed reaction is (S)-lactate + NAD(+) = pyruvate + NADH + H(+). The protein operates within fermentation; pyruvate fermentation to lactate; (S)-lactate from pyruvate: step 1/1. With respect to regulation, allosterically activated by fructose 1,6-bisphosphate (FBP). Functionally, catalyzes the conversion of lactate to pyruvate. The sequence is that of L-lactate dehydrogenase from Streptococcus thermophilus (strain CNRZ 1066).